The following is a 136-amino-acid chain: Glutamyl-tRNA(Gln) amidotransferase subunit C, mitochondrial (136 aa).

Belongs to the GatC family. In terms of assembly, subunit of the heterotrimeric GatCAB amidotransferase (AdT) complex, composed of A (QRSL1), B (GATB) and C (GATC) subunits.

The protein localises to the mitochondrion. It catalyses the reaction L-glutamyl-tRNA(Gln) + L-glutamine + ATP + H2O = L-glutaminyl-tRNA(Gln) + L-glutamate + ADP + phosphate + H(+). Functionally, allows the formation of correctly charged Gln-tRNA(Gln) through the transamidation of misacylated Glu-tRNA(Gln) in the mitochondria. The reaction takes place in the presence of glutamine and ATP through an activated gamma-phospho-Glu-tRNA(Gln). This is Glutamyl-tRNA(Gln) amidotransferase subunit C, mitochondrial from Homo sapiens (Human).